Consider the following 539-residue polypeptide: O-phosphoserine--tRNA(Cys) ligase (539 aa).

Substrate is bound by residues 188 to 190, 233 to 235, 275 to 276, and N319; these read HMT, SAS, and YY.

It belongs to the class-II aminoacyl-tRNA synthetase family. O-phosphoseryl-tRNA(Cys) synthetase subfamily. In terms of assembly, homotetramer. Interacts with SepCysS.

The catalysed reaction is tRNA(Cys) + O-phospho-L-serine + ATP = O-phospho-L-seryl-tRNA(Cys) + AMP + diphosphate. In terms of biological role, catalyzes the attachment of O-phosphoserine (Sep) to tRNA(Cys). The sequence is that of O-phosphoserine--tRNA(Cys) ligase (sepS) from Methanocaldococcus jannaschii (strain ATCC 43067 / DSM 2661 / JAL-1 / JCM 10045 / NBRC 100440) (Methanococcus jannaschii).